Reading from the N-terminus, the 424-residue chain is Sulfate adenylyltransferase (424 aa).

It belongs to the sulfate adenylyltransferase family.

The catalysed reaction is sulfate + ATP + H(+) = adenosine 5'-phosphosulfate + diphosphate. The protein operates within sulfur metabolism; hydrogen sulfide biosynthesis; sulfite from sulfate: step 1/3. This Desulfatibacillum aliphaticivorans protein is Sulfate adenylyltransferase.